Consider the following 318-residue polypeptide: Malonyl-S-ACP:biotin-protein carboxyltransferase MADC (318 aa).

The CoA carboxyltransferase N-terminal domain occupies 2 to 257; sequence AKWTELQDKS…VLQKPMEEIE (256 aa).

Its subcellular location is the cytoplasm. It carries out the reaction N(6)-biotinyl-L-lysyl-[protein] + malonyl-[ACP] = N(6)-carboxybiotinyl-L-lysyl-[protein] + acetyl-[ACP]. Functionally, gamma subunit of the biotin-dependent malonate decarboxylase multienzyme complex (EC 7.2.4.4). The two subunits MADC and MADD are required for the transfer of the malonate carboxy group from the acyl-carrier protein (ACP) to the prosthetic group of the biotin carrier MADF. Required for the regeneration of ACP. The protein is Malonyl-S-ACP:biotin-protein carboxyltransferase MADC (madC) of Malonomonas rubra.